The following is a 1881-amino-acid chain: Endoribonuclease Dicer-S (1881 aa).

Residues 41–217 (LLEAALDHNI…DLEEKIQNLE (177 aa)) enclose the Helicase ATP-binding domain. 54 to 61 (LNSGSGKT) provides a ligand contact to ATP. Positions 165–168 (DECH) match the DECH box motif. The Helicase C-terminal domain occupies 425 to 594 (SFPSPFTNIL…SMDCGNTESE (170 aa)). Positions 622 to 714 (AIGHINRYCA…MPVGKETVKY (93 aa)) constitute a Dicer dsRNA-binding fold domain. Residues 887 to 1034 (KFVEDIEKSE…LVPELCAIHP (148 aa)) form the PAZ domain. RNase III domains follow at residues 1249–1380 (TSDI…ETSG) and 1625–1783 (FENF…MDSG). Residues Glu-1293, Asp-1371, Glu-1374, Glu-1664, Asp-1769, and Glu-1772 each coordinate Mg(2+). The DRBM domain occupies 1808 to 1873 (VPRSPVRELL…ARRALRSLKA (66 aa)).

It belongs to the helicase family. Dicer subfamily. In terms of assembly, component of the RISC loading complex (RLC), or micro-RNA (miRNA) loading complex (miRLC), which is composed of dicer1, ago2 and tarbp2; dicer1 and tarbp2 are required to process precursor miRNAs (pre-miRNAs) to mature miRNAs and then load them onto ago2. Note that the trimeric RLC/miRLC is also referred to as RISC. Mg(2+) is required as a cofactor. The cofactor is Mn(2+).

It is found in the cytoplasm. The catalysed reaction is Endonucleolytic cleavage to 5'-phosphomonoester.. In terms of biological role, double-stranded RNA (dsRNA) endoribonuclease playing a central role in short dsRNA-mediated post-transcriptional gene silencing. Cleaves naturally occurring long dsRNAs and short hairpin pre-microRNAs (miRNA) into fragments of twenty-one to twenty-three nucleotides with 3' overhang of two nucleotides, producing respectively short interfering RNAs (siRNA) and mature microRNAs. SiRNAs and miRNAs serve as guide to direct the RNA-induced silencing complex (RISC) to complementary RNAs to degrade them or prevent their translation. Gene silencing mediated by siRNAs, also called RNA interference, controls the elimination of transcripts from mobile and repetitive DNA elements of the genome but also the degradation of exogenous RNA of viral origin for instance. The miRNA pathway on the other side is a mean to specifically regulate the expression of target genes. During embryonic development, at the left-right organizer, post-transcriptionally regulates the expression of dand5 in flow sensor cells. In post-flow stages, acts along with Bicc1 to repress dand5 mRNA translation and decay. Decreased Dand5 expression lifts repression of Nodal and defines leftness by induction of the lateral plate mesoderm Nodal signaling cascade. The sequence is that of Endoribonuclease Dicer-S (dicer1.S) from Xenopus laevis (African clawed frog).